A 365-amino-acid chain; its full sequence is Flagellar P-ring protein (365 aa).

Residues 1-19 (MIKFLSALILLLVTTAAQA) form the signal peptide.

It belongs to the FlgI family. In terms of assembly, the basal body constitutes a major portion of the flagellar organelle and consists of four rings (L,P,S, and M) mounted on a central rod.

The protein resides in the periplasm. The protein localises to the bacterial flagellum basal body. Assembles around the rod to form the L-ring and probably protects the motor/basal body from shearing forces during rotation. The protein is Flagellar P-ring protein of Shigella flexneri serotype 5b (strain 8401).